Consider the following 634-residue polypeptide: 1-deoxy-D-xylulose-5-phosphate synthase (634 aa).

Thiamine diphosphate is bound by residues H77 and 118–120; that span reads GHA. Residue D149 coordinates Mg(2+). Residues 150–151, N178, Y289, and E371 each bind thiamine diphosphate; that span reads AS. Position 178 (N178) interacts with Mg(2+).

Belongs to the transketolase family. DXPS subfamily. Homodimer. Mg(2+) is required as a cofactor. Requires thiamine diphosphate as cofactor.

The catalysed reaction is D-glyceraldehyde 3-phosphate + pyruvate + H(+) = 1-deoxy-D-xylulose 5-phosphate + CO2. The protein operates within metabolic intermediate biosynthesis; 1-deoxy-D-xylulose 5-phosphate biosynthesis; 1-deoxy-D-xylulose 5-phosphate from D-glyceraldehyde 3-phosphate and pyruvate: step 1/1. Catalyzes the acyloin condensation reaction between C atoms 2 and 3 of pyruvate and glyceraldehyde 3-phosphate to yield 1-deoxy-D-xylulose-5-phosphate (DXP). In Leptospira interrogans serogroup Icterohaemorrhagiae serovar copenhageni (strain Fiocruz L1-130), this protein is 1-deoxy-D-xylulose-5-phosphate synthase.